A 417-amino-acid chain; its full sequence is Serine hydroxymethyltransferase (417 aa).

(6S)-5,6,7,8-tetrahydrofolate contacts are provided by residues Leu121 and 125–127 (GHL). The residue at position 229 (Lys229) is an N6-(pyridoxal phosphate)lysine. 355–357 (SPF) lines the (6S)-5,6,7,8-tetrahydrofolate pocket.

Belongs to the SHMT family. Homodimer. Pyridoxal 5'-phosphate is required as a cofactor.

Its subcellular location is the cytoplasm. The catalysed reaction is (6R)-5,10-methylene-5,6,7,8-tetrahydrofolate + glycine + H2O = (6S)-5,6,7,8-tetrahydrofolate + L-serine. It functions in the pathway one-carbon metabolism; tetrahydrofolate interconversion. It participates in amino-acid biosynthesis; glycine biosynthesis; glycine from L-serine: step 1/1. In terms of biological role, catalyzes the reversible interconversion of serine and glycine with tetrahydrofolate (THF) serving as the one-carbon carrier. This reaction serves as the major source of one-carbon groups required for the biosynthesis of purines, thymidylate, methionine, and other important biomolecules. Also exhibits THF-independent aldolase activity toward beta-hydroxyamino acids, producing glycine and aldehydes, via a retro-aldol mechanism. This Xanthomonas euvesicatoria pv. vesicatoria (strain 85-10) (Xanthomonas campestris pv. vesicatoria) protein is Serine hydroxymethyltransferase.